The chain runs to 457 residues: MRGTLATALLLVISSRVATESNQLDPQQLSNHVVGTYDKIYTKSSPRRFLRGSRKQRDDLAPTAADENRTINNAIESAMHGITFSGGTTAATRNAAREVVDINAFSKRPRLSLNVPPSETSAHLIEAPTFPQRNSASTSTTSDIATSSSRTSNQRTPKTQASLDMSHKTMTRKSSSKNQFKKSTALKSTKRKVRARKIPAFVVNKVYTLYFDHVKTKSLGFDPTVKETKAMLSLYFESSVDPFYVSAVLSNFFRYFDDKELTIHKKKLGTTLTSALSTLAALELPPGMLKEIERPFVWYASLKRWRVMYCDFFEFVKVNSDKITNSLPNKEFYRGETSDIVRDKLLATLKKETNTNTRYKRKRKLKNDLDDVLKKYNVKEEIGAAIRDLGEQFLKADRQTIPSRRPTRRPGASHIQPSNQRTDLTPHGLQVPGPEKNSYQHIKSKDHARKKRPRSSS.

The signal sequence occupies residues 1 to 19; the sequence is MRGTLATALLLVISSRVAT. A RxLR-dEER motif is present at residues 48 to 69; sequence RFLRGSRKQRDDLAPTAADENR. A glycan (N-linked (GlcNAc...) asparagine) is linked at N68. Disordered regions lie at residues 110–188 and 398–457; these read RLSL…ALKS and RQTI…RSSS. Low complexity predominate over residues 135–152; sequence SASTSTTSDIATSSSRTS. 2 stretches are compositionally biased toward polar residues: residues 153–163 and 176–187; these read NQRTPKTQASL and SKNQFKKSTALK. The span at 442–457 shows a compositional bias: basic residues; the sequence is IKSKDHARKKRPRSSS.

It belongs to the RxLR effector family.

Its subcellular location is the secreted. The protein resides in the host nucleus. In terms of biological role, secreted effector that completely suppresses the host cell death induced by cell death-inducing proteins. The protein is Secreted RxLR effector protein 8 of Plasmopara viticola (Downy mildew of grapevine).